The sequence spans 244 residues: 7-cyano-7-deazaguanine synthase (244 aa).

14 to 24 (FSGGQDSATCV) contacts ATP. Residues Cys-202, Cys-217, Cys-220, and Cys-223 each contribute to the Zn(2+) site.

It belongs to the QueC family. Zn(2+) is required as a cofactor.

The catalysed reaction is 7-carboxy-7-deazaguanine + NH4(+) + ATP = 7-cyano-7-deazaguanine + ADP + phosphate + H2O + H(+). It participates in purine metabolism; 7-cyano-7-deazaguanine biosynthesis. Catalyzes the ATP-dependent conversion of 7-carboxy-7-deazaguanine (CDG) to 7-cyano-7-deazaguanine (preQ(0)). This chain is 7-cyano-7-deazaguanine synthase, found in Burkholderia thailandensis (strain ATCC 700388 / DSM 13276 / CCUG 48851 / CIP 106301 / E264).